The sequence spans 176 residues: Large ribosomal subunit protein uL10 (176 aa).

This sequence belongs to the universal ribosomal protein uL10 family. As to quaternary structure, part of the ribosomal stalk of the 50S ribosomal subunit. The N-terminus interacts with L11 and the large rRNA to form the base of the stalk. The C-terminus forms an elongated spine to which L12 dimers bind in a sequential fashion forming a multimeric L10(L12)X complex.

In terms of biological role, forms part of the ribosomal stalk, playing a central role in the interaction of the ribosome with GTP-bound translation factors. This chain is Large ribosomal subunit protein uL10, found in Mycobacteroides abscessus (strain ATCC 19977 / DSM 44196 / CCUG 20993 / CIP 104536 / JCM 13569 / NCTC 13031 / TMC 1543 / L948) (Mycobacterium abscessus).